Reading from the N-terminus, the 478-residue chain is tRNA modification GTPase MnmE (478 aa).

Residues R36, E94, and K133 each contribute to the (6S)-5-formyl-5,6,7,8-tetrahydrofolate site. The TrmE-type G domain occupies 230 to 402 (GIHVVLAGRP…LVETLCAKVG (173 aa)). N240 contacts K(+). Residues 240–245 (NAGKSS), 259–265 (TDVAGTT), and 284–287 (DTAG) contribute to the GTP site. A Mg(2+)-binding site is contributed by S244. T259, V261, and T264 together coordinate K(+). T265 serves as a coordination point for Mg(2+). K478 provides a ligand contact to (6S)-5-formyl-5,6,7,8-tetrahydrofolate.

Belongs to the TRAFAC class TrmE-Era-EngA-EngB-Septin-like GTPase superfamily. TrmE GTPase family. In terms of assembly, homodimer. Heterotetramer of two MnmE and two MnmG subunits. It depends on K(+) as a cofactor.

The protein resides in the cytoplasm. In terms of biological role, exhibits a very high intrinsic GTPase hydrolysis rate. Involved in the addition of a carboxymethylaminomethyl (cmnm) group at the wobble position (U34) of certain tRNAs, forming tRNA-cmnm(5)s(2)U34. This chain is tRNA modification GTPase MnmE, found in Psychrobacter arcticus (strain DSM 17307 / VKM B-2377 / 273-4).